Consider the following 461-residue polypeptide: 26S proteasome regulatory subunit 8 (461 aa).

An ATP-binding site is contributed by 185–192 (GPPGTGKT).

Belongs to the AAA ATPase family.

It localises to the cytoplasm. The protein localises to the nucleus. Functionally, the 26S proteasome is involved in the ATP-dependent degradation of ubiquitinated proteins. The regulatory (or ATPase) complex confers ATP dependency and substrate specificity to the 26S complex. The chain is 26S proteasome regulatory subunit 8 (psmc5) from Xenopus laevis (African clawed frog).